A 757-amino-acid chain; its full sequence is Voltage-gated potassium channel KCNC3 (757 aa).

An important for normal N-type inactivation region spans residues 1–78; that stretch reads MLSSVCVSSF…CPGLPAAAMG (78 aa). A disordered region spans residues 1-87; that stretch reads MLSSVCVSSF…GRHGGGGGDS (87 aa). The Cytoplasmic portion of the chain corresponds to 1–290; sequence MLSSVCVSSF…EDPYSSRAAR (290 aa). Residues 21–40 are compositionally biased toward pro residues; the sequence is PAPPPQPPESPPPPPLPPQQ. The segment covering 41-52 has biased composition (low complexity); sequence QQPAQPGPAASP. Zn(2+)-binding residues include H157, C163, C184, and C185. Over residues 210–219 the composition is skewed to low complexity; that stretch reads AANAANAAGA. Residues 210–232 form a disordered region; the sequence is AANAANAAGAHDGGLDDEAGAGG. The helical transmembrane segment at 291–309 threads the bilayer; that stretch reads YVAFASLFFILISITTFCL. 2 N-linked (GlcNAc...) asparagine glycosylation sites follow: N320 and N336. Residues 351-370 form a helical membrane-spanning segment; sequence VEGVCVVWFTFEFLMRITFC. Topologically, residues 371–379 are cytoplasmic; it reads PDKVEFLKS. A helical membrane pass occupies residues 380–398; sequence SLNIIDCVAILPFYLEVGL. The helical; Voltage-sensor transmembrane segment at 412–434 threads the bilayer; it reads FLRVVRFVRILRIFKLTRHFVGL. Residues 435 to 447 are Cytoplasmic-facing; the sequence is RVLGHTLRASTNE. A helical membrane pass occupies residues 448–469; the sequence is FLLLIIFLALGVLIFATMIYYA. Residue N483 is glycosylated (N-linked (GlcNAc...) asparagine). K(+)-binding residues include T503, L504, G505, and Y506. The short motif at 503 to 508 is the Selectivity filter element; sequence TLGYGD. Residues 518-539 form a helical membrane-spanning segment; that stretch reads LVGALCALAGVLTIAMPVPVIV. At 540–757 the chain is on the cytoplasmic side; sequence NNFGMYYSLA…NANAAAWISP (218 aa). The tract at residues 556–613 is disordered; sequence PKKKNKHIPRPPQPGSPNYCKPDPPPPPPPHPHHGSGGISPPPPITPPSMGVTVAGAY. R625 is modified (omega-N-methylarginine). The segment at 682–746 is disordered; that stretch reads QPAMSPEDKS…KPGPPSFLPD (65 aa). Phosphoserine occurs at positions 686 and 691. Positions 728 to 743 are enriched in pro residues; sequence PPLPPQDWRKPGPPSF.

This sequence belongs to the potassium channel family. C (Shaw) (TC 1.A.1.2) subfamily. Kv3.3/KCNC3 sub-subfamily. In terms of assembly, homotetramer. Heterotetramer with KCNC1. Interacts (via C-terminus) with HAX1; this interaction modulates channel gating. Identified in a complex with ACTR3, a subunit of the Arp2/3 complex; this interaction is indirect and depends on the presence of HAX1. In terms of processing, N-glycosylated.

It is found in the cell membrane. It localises to the presynaptic cell membrane. Its subcellular location is the perikaryon. The protein resides in the cell projection. The protein localises to the axon. It is found in the dendrite. It localises to the dendritic spine membrane. Its subcellular location is the cytoplasm. The protein resides in the cell cortex. The protein localises to the cytoskeleton. It catalyses the reaction K(+)(in) = K(+)(out). Functionally, voltage-gated potassium channel that plays an important role in the rapid repolarization of fast-firing brain neurons. The channel opens in response to the voltage difference across the membrane, forming a potassium-selective channel through which potassium ions pass in accordance with their electrochemical gradient. The channel displays rapid activation and inactivation kinetics. It plays a role in the regulation of the frequency, shape and duration of action potentials in Purkinje cells. Required for normal survival of cerebellar neurons, probably via its role in regulating the duration and frequency of action potentials that in turn regulate the activity of voltage-gated Ca(2+) channels and cellular Ca(2+) homeostasis. Required for normal motor function. Plays a role in the reorganization of the cortical actin cytoskeleton and the formation of actin veil structures in neuronal growth cones via its interaction with HAX1 and the Arp2/3 complex. The sequence is that of Voltage-gated potassium channel KCNC3 (KCNC3) from Homo sapiens (Human).